Here is a 424-residue protein sequence, read N- to C-terminus: Histidine--tRNA ligase (424 aa).

Belongs to the class-II aminoacyl-tRNA synthetase family. Homodimer.

Its subcellular location is the cytoplasm. The catalysed reaction is tRNA(His) + L-histidine + ATP = L-histidyl-tRNA(His) + AMP + diphosphate + H(+). This chain is Histidine--tRNA ligase, found in Thioalkalivibrio sulfidiphilus (strain HL-EbGR7).